The following is an 854-amino-acid chain: Nucleolar MIF4G domain-containing protein 1 (854 aa).

Residues 2–275 (PRNVPEVNGV…EEDPDWQVLQ (274 aa)) form a necessary for nucleolar localization and for targeting PPP1CA to the nucleolus region. Ser-60 is modified (phosphoserine). Disordered stretches follow at residues 66 to 215 (ESRS…PLSF) and 231 to 333 (SGGG…GEKY). Positions 76 to 99 (PGGRKSRKELRKEKRHLRKARRLQ) are enriched in basic residues. The segment covering 104–113 (SGSGDQGGNV) has biased composition (gly residues). Residues 128–173 (VRPTPAKATATPAKASAPSTNTKASAAQPKAKAKGAPGKPGPATAT) show a composition bias toward low complexity. A compositionally biased stretch (basic and acidic residues) spans 188–197 (REIRKLERCL). Positions 265-280 (SEEDPDWQVLQEDQED) are enriched in acidic residues. Basic and acidic residues-rich tracts occupy residues 281-291 (VNSKRRGEAES), 303-315 (RFAE…RSSS), and 322-331 (QESHSVESGE). The Required for efficient binding to PPP1CA and for targeting PPP1CA to the nucleolus motif lies at 301 to 304 (KVRF). Ser-311, Ser-314, and Ser-315 each carry phosphoserine. An MIF4G domain is found at 356-553 (KKHVKGLINR…ETMLALKNND (198 aa)). The MI domain maps to 648–764 (DVRRIIFCTL…PLSVLKVVEF (117 aa)).

It belongs to the CWC22 family. In terms of assembly, may interact with EIF4A1, EIF4A2 and EIF4A3. Interacts with PPP1CA and PPP1CC.

The protein localises to the nucleus. It localises to the nucleolus. Functionally, plays a role in targeting PPP1CA to the nucleolus. This is Nucleolar MIF4G domain-containing protein 1 (Nom1) from Mus musculus (Mouse).